The following is a 280-amino-acid chain: Putative pyruvate, phosphate dikinase regulatory protein (280 aa).

Position 154–161 (154–161 (GVSRTSKT)) interacts with ADP.

Belongs to the pyruvate, phosphate/water dikinase regulatory protein family. PDRP subfamily.

It carries out the reaction N(tele)-phospho-L-histidyl/L-threonyl-[pyruvate, phosphate dikinase] + ADP = N(tele)-phospho-L-histidyl/O-phospho-L-threonyl-[pyruvate, phosphate dikinase] + AMP + H(+). The enzyme catalyses N(tele)-phospho-L-histidyl/O-phospho-L-threonyl-[pyruvate, phosphate dikinase] + phosphate + H(+) = N(tele)-phospho-L-histidyl/L-threonyl-[pyruvate, phosphate dikinase] + diphosphate. Its function is as follows. Bifunctional serine/threonine kinase and phosphorylase involved in the regulation of the pyruvate, phosphate dikinase (PPDK) by catalyzing its phosphorylation/dephosphorylation. The protein is Putative pyruvate, phosphate dikinase regulatory protein of Nitrobacter hamburgensis (strain DSM 10229 / NCIMB 13809 / X14).